The primary structure comprises 496 residues: L-arabinose isomerase (496 aa).

Residues E302, E329, H346, and H445 each contribute to the Mn(2+) site.

Belongs to the arabinose isomerase family. Requires Mn(2+) as cofactor.

It carries out the reaction beta-L-arabinopyranose = L-ribulose. The protein operates within carbohydrate degradation; L-arabinose degradation via L-ribulose; D-xylulose 5-phosphate from L-arabinose (bacterial route): step 1/3. In terms of biological role, catalyzes the conversion of L-arabinose to L-ribulose. The sequence is that of L-arabinose isomerase from Thermotoga sp. (strain RQ2).